The primary structure comprises 113 residues: uncharacterized protein (113 aa).

This is an uncharacterized protein from Mycoplasma pneumoniae (strain ATCC 29342 / M129 / Subtype 1) (Mycoplasmoides pneumoniae).